The sequence spans 274 residues: Diaminopimelate epimerase (274 aa).

Substrate contacts are provided by asparagine 11, glutamine 44, and asparagine 64. Cysteine 73 acts as the Proton donor in catalysis. Substrate-binding positions include 74 to 75 (GN), asparagine 157, asparagine 190, and 208 to 209 (ER). Residue cysteine 217 is the Proton acceptor of the active site. Position 218-219 (218-219 (GS)) interacts with substrate.

The protein belongs to the diaminopimelate epimerase family. In terms of assembly, homodimer.

Its subcellular location is the cytoplasm. The catalysed reaction is (2S,6S)-2,6-diaminopimelate = meso-2,6-diaminopimelate. It functions in the pathway amino-acid biosynthesis; L-lysine biosynthesis via DAP pathway; DL-2,6-diaminopimelate from LL-2,6-diaminopimelate: step 1/1. In terms of biological role, catalyzes the stereoinversion of LL-2,6-diaminopimelate (L,L-DAP) to meso-diaminopimelate (meso-DAP), a precursor of L-lysine and an essential component of the bacterial peptidoglycan. This is Diaminopimelate epimerase from Actinobacillus pleuropneumoniae serotype 3 (strain JL03).